The following is a 209-amino-acid chain: MGKVYVFDHPLIQHKLTYIRNENTGTKDFRDLVDEVASLMAFEITRDLPLKEVEVKTPVQTATSKVISGKKLGIVPILRAGLGMVDGMLKLIPAAKVGHVGLYRDPETLKPVEYYVKLPSDVEEREFIVVDPMLATGGSAVEAINSLKKRGARNIRFMCLVAAPEGVEELQKHHSDVDIYIAALDEKLNEKGYIVPGLGDAGDRLYGTK.

Residues Arg-79, Arg-104, and 131-139 (DPMLATGGS) contribute to the 5-phospho-alpha-D-ribose 1-diphosphate site. Residues Ile-194 and 199–201 (GDA) each bind uracil. Asp-200 lines the 5-phospho-alpha-D-ribose 1-diphosphate pocket.

This sequence belongs to the UPRTase family. Mg(2+) is required as a cofactor.

The catalysed reaction is UMP + diphosphate = 5-phospho-alpha-D-ribose 1-diphosphate + uracil. The protein operates within pyrimidine metabolism; UMP biosynthesis via salvage pathway; UMP from uracil: step 1/1. Its activity is regulated as follows. Allosterically activated by GTP. In terms of biological role, catalyzes the conversion of uracil and 5-phospho-alpha-D-ribose 1-diphosphate (PRPP) to UMP and diphosphate. This chain is Uracil phosphoribosyltransferase, found in Bacillus velezensis (strain DSM 23117 / BGSC 10A6 / LMG 26770 / FZB42) (Bacillus amyloliquefaciens subsp. plantarum).